We begin with the raw amino-acid sequence, 239 residues long: Ubiquinone biosynthesis O-methyltransferase (239 aa).

4 residues coordinate S-adenosyl-L-methionine: arginine 44, glycine 63, aspartate 84, and methionine 128.

It belongs to the methyltransferase superfamily. UbiG/COQ3 family.

The catalysed reaction is a 3-demethylubiquinol + S-adenosyl-L-methionine = a ubiquinol + S-adenosyl-L-homocysteine + H(+). It carries out the reaction a 3-(all-trans-polyprenyl)benzene-1,2-diol + S-adenosyl-L-methionine = a 2-methoxy-6-(all-trans-polyprenyl)phenol + S-adenosyl-L-homocysteine + H(+). It functions in the pathway cofactor biosynthesis; ubiquinone biosynthesis. In terms of biological role, O-methyltransferase that catalyzes the 2 O-methylation steps in the ubiquinone biosynthetic pathway. The sequence is that of Ubiquinone biosynthesis O-methyltransferase from Xanthomonas campestris pv. campestris (strain 8004).